Reading from the N-terminus, the 104-residue chain is Putative membrane protein insertion efficiency factor (104 aa).

The disordered stretch occupies residues 83 to 104 (SSPTPLAESPDDRTVPHTQETS).

This sequence belongs to the UPF0161 family.

Its subcellular location is the cell inner membrane. Could be involved in insertion of integral membrane proteins into the membrane. The protein is Putative membrane protein insertion efficiency factor of Chlamydia trachomatis serovar D (strain ATCC VR-885 / DSM 19411 / UW-3/Cx).